The primary structure comprises 436 residues: Probable protein phosphatase 2C 15 (436 aa).

Positions 30–302 constitute a PPM-type phosphatase domain; the sequence is KAAKMEKPIV…DDTTCIVVDI (273 aa). Mn(2+)-binding residues include Asp-78, Gly-79, Asp-254, and Asp-293.

Belongs to the PP2C family. Requires Mg(2+) as cofactor. The cofactor is Mn(2+).

The enzyme catalyses O-phospho-L-seryl-[protein] + H2O = L-seryl-[protein] + phosphate. The catalysed reaction is O-phospho-L-threonyl-[protein] + H2O = L-threonyl-[protein] + phosphate. The chain is Probable protein phosphatase 2C 15 from Arabidopsis thaliana (Mouse-ear cress).